A 1624-amino-acid chain; its full sequence is NAD-specific glutamate dehydrogenase (1624 aa).

The active site involves Lys845.

The protein belongs to the Glu/Leu/Phe/Val dehydrogenases family. As to quaternary structure, interacts with (unphosphorylated) GarA.

It carries out the reaction L-glutamate + NAD(+) + H2O = 2-oxoglutarate + NH4(+) + NADH + H(+). With respect to regulation, activity is inhibited by unphosphorylated GarA. Functionally, catalyzes the reversible conversion of L-glutamate to 2-oxoglutarate. This Mycobacterium tuberculosis (strain ATCC 25618 / H37Rv) protein is NAD-specific glutamate dehydrogenase (gdh).